We begin with the raw amino-acid sequence, 376 residues long: Chaperone protein DnaJ (376 aa).

In terms of domain architecture, J spans Asp5 to Gly70. The segment at Gly132–Ser210 adopts a CR-type zinc-finger fold. Positions 145, 148, 162, 165, 184, 187, 198, and 201 each coordinate Zn(2+). CXXCXGXG motif repeat units follow at residues Cys145–Gly152, Cys162–Gly169, Cys184–Gly191, and Cys198–Gly205.

This sequence belongs to the DnaJ family. In terms of assembly, homodimer. Zn(2+) serves as cofactor.

The protein localises to the cytoplasm. Its function is as follows. Participates actively in the response to hyperosmotic and heat shock by preventing the aggregation of stress-denatured proteins and by disaggregating proteins, also in an autonomous, DnaK-independent fashion. Unfolded proteins bind initially to DnaJ; upon interaction with the DnaJ-bound protein, DnaK hydrolyzes its bound ATP, resulting in the formation of a stable complex. GrpE releases ADP from DnaK; ATP binding to DnaK triggers the release of the substrate protein, thus completing the reaction cycle. Several rounds of ATP-dependent interactions between DnaJ, DnaK and GrpE are required for fully efficient folding. Also involved, together with DnaK and GrpE, in the DNA replication of plasmids through activation of initiation proteins. The protein is Chaperone protein DnaJ of Shewanella pealeana (strain ATCC 700345 / ANG-SQ1).